Here is a 286-residue protein sequence, read N- to C-terminus: uncharacterized protein (286 aa).

Residues Ile-54, Asn-128, and Lys-162 each coordinate NADP(+). Ser-178 functions as the Proton donor in the catalytic mechanism. NADP(+) contacts are provided by Tyr-192, Lys-196, Ile-225, and Thr-227. Residue Tyr-192 is the Proton acceptor of the active site. Residue Lys-196 is the Lowers pKa of active site Tyr of the active site.

It belongs to the short-chain dehydrogenases/reductases (SDR) family.

This is an uncharacterized protein from Schizosaccharomyces pombe (strain 972 / ATCC 24843) (Fission yeast).